Reading from the N-terminus, the 369-residue chain is 3-isopropylmalate dehydrogenase (369 aa).

An NAD(+)-binding site is contributed by 77–90; it reads GPKWDDLPFDKKPE. Arginine 97, arginine 107, arginine 135, and aspartate 226 together coordinate substrate. Mg(2+) is bound by residues aspartate 226, aspartate 250, and aspartate 254. Residue 289–301 coordinates NAD(+); that stretch reads GSAPDIAGKDMAN.

The protein belongs to the isocitrate and isopropylmalate dehydrogenases family. LeuB type 1 subfamily. Homodimer. Requires Mg(2+) as cofactor. The cofactor is Mn(2+).

The protein localises to the cytoplasm. It carries out the reaction (2R,3S)-3-isopropylmalate + NAD(+) = 4-methyl-2-oxopentanoate + CO2 + NADH. The protein operates within amino-acid biosynthesis; L-leucine biosynthesis; L-leucine from 3-methyl-2-oxobutanoate: step 3/4. In terms of biological role, catalyzes the oxidation of 3-carboxy-2-hydroxy-4-methylpentanoate (3-isopropylmalate) to 3-carboxy-4-methyl-2-oxopentanoate. The product decarboxylates to 4-methyl-2 oxopentanoate. The polypeptide is 3-isopropylmalate dehydrogenase (Paramagnetospirillum magneticum (strain ATCC 700264 / AMB-1) (Magnetospirillum magneticum)).